A 42-amino-acid polypeptide reads, in one-letter code: MADKPDLGEINSFDKAKLKKTETQEKNTLPTKETIEQEKQAK.

Composition is skewed to basic and acidic residues over residues methionine 1 to glutamate 25 and glutamate 33 to lysine 42. The interval methionine 1–lysine 42 is disordered. Alanine 2 bears the N-acetylalanine mark. At lysine 4 the chain carries N6-acetyllysine. Serine 12 carries the phosphoserine modification. N6-acetyllysine is present on lysine 15. Threonine 21, threonine 23, and threonine 34 each carry phosphothreonine. At lysine 39 the chain carries N6-acetyllysine.

This sequence belongs to the thymosin beta family. In terms of tissue distribution, distributed in numerous types of tissues, including thymus, spleen, lung, liver and muscle.

Its subcellular location is the cytoplasm. It localises to the cytoskeleton. Functionally, plays an important role in the organization of the cytoskeleton. Binds to and sequesters actin monomers (G actin) and therefore inhibits actin polymerization. The sequence is that of Thymosin beta-10 (TMSB10) from Bos taurus (Bovine).